Here is a 237-residue protein sequence, read N- to C-terminus: Type II secretion system protein J (237 aa).

Residues 1–6 (MRLQRG) constitute a propeptide, leader sequence. At Phe-7 the chain carries N-methylphenylalanine. Residues 7-29 (FTLLELLIAIAIFALLALATYRM) form a helical membrane-spanning segment. Positions 203–237 (PLKQDQPQGQPGGENGENGEGGVPQPPEGMPGAPE) are disordered. Residues 212–224 (QPGGENGENGEGG) show a composition bias toward gly residues. The segment covering 226-237 (PQPPEGMPGAPE) has biased composition (pro residues).

This sequence belongs to the GSP J family. As to quaternary structure, type II secretion is composed of four main components: the outer membrane complex, the inner membrane complex, the cytoplasmic secretion ATPase and the periplasm-spanning pseudopilus. Forms the tip of the type II pseudopilus by interacting with XcpV, XcpU and XcpX. Interacts with core component XcpT. In terms of processing, cleaved by prepilin peptidase. Post-translationally, methylated by prepilin peptidase at the amino group of the N-terminal phenylalanine once the leader sequence is cleaved by prepilin peptidase.

Its subcellular location is the cell inner membrane. Component of the type II secretion system required for the energy-dependent secretion of extracellular factors such as proteases and toxins from the periplasm. Part of the pseudopilus tip complex that is critical for the recognition and binding of secretion substrates. Type II pseudopilus confers increased bacterial adhesive capabilities. The chain is Type II secretion system protein J (xcpW) from Pseudomonas aeruginosa (strain ATCC 15692 / DSM 22644 / CIP 104116 / JCM 14847 / LMG 12228 / 1C / PRS 101 / PAO1).